The following is a 226-amino-acid chain: V-type proton ATPase subunit E (226 aa).

The protein belongs to the V-ATPase E subunit family. In terms of assembly, V-ATPase is a heteromultimeric enzyme composed of a peripheral catalytic V1 complex (components A to H) attached to an integral membrane V0 proton pore complex (components: a, c, c', c'', d, e, f and VOA1).

Its subcellular location is the vacuole membrane. Functionally, subunit of the V1 complex of vacuolar(H+)-ATPase (V-ATPase), a multisubunit enzyme composed of a peripheral complex (V1) that hydrolyzes ATP and a membrane integral complex (V0) that translocates protons. V-ATPase is responsible for acidifying and maintaining the pH of intracellular compartments. The protein is V-type proton ATPase subunit E (VMA4) of Candida albicans (Yeast).